The chain runs to 179 residues: Sperm surface protein Sp17 (179 aa).

Positions 72-109 (HAFKDEPPEKSETQKIQPEKVAIEKETMPQETVKEKET) are enriched in basic and acidic residues. Disordered regions lie at residues 72-138 (HAFK…EGLL) and 159-179 (TRKEYLKKRDSTDETADENNE). The segment covering 116 to 135 (EPTEEPQKEEEEEEDEEDLE) has biased composition (acidic residues). The 30-residue stretch at 143–172 (MQDAAVKIQAVFRGHKTRKEYLKKRDSTDE) folds into the IQ domain. Positions 161–170 (KEYLKKRDST) are enriched in basic and acidic residues.

In terms of assembly, homodimer. May interact with ROPN1. As to expression, testis- and sperm-specific.

The protein localises to the membrane. Sperm surface zona pellucida binding protein. Helps to bind spermatozoa to the zona pellucida with high affinity. Might function in binding zona pellucida and carbohydrates. This chain is Sperm surface protein Sp17 (SPA17), found in Monodelphis domestica (Gray short-tailed opossum).